We begin with the raw amino-acid sequence, 235 residues long: Transmembrane emp24 domain-containing protein 9 (235 aa).

The N-terminal stretch at 1–37 (MAAERSLWVVGLCPGSRLGRVVRVLLLLLWFAARGGA) is a signal peptide. The Lumenal portion of the chain corresponds to 38–201 (LYFHIGETEK…FRQTSESTNQ (164 aa)). One can recognise a GOLD domain in the interval 47 to 145 (KKCFIEEIPD…MLRVHLDIQV (99 aa)). The interval 121 to 160 (CLHSNSTKFSLFAGGMLRVHLDIQVGEHANDYAEIAAKDK) is required for interaction with STX17. N-linked (GlcNAc...) asparagine glycosylation is present at Asn-125. The stretch at 154 to 184 (EIAAKDKLSELQLRVRQLVEQVEQIQKEQNY) forms a coiled coil. Residue Lys-160 is modified to N6-acetyllysine. The chain crosses the membrane as a helical span at residues 202–222 (RVLWWSILQTLILVAIGVWQM). Over 223-235 (RHLKSFFEAKKLV) the chain is Cytoplasmic. The short motif at 228 to 229 (FF) is the COPII vesicle coat-binding element. Positions 228 to 235 (FFEAKKLV) match the COPI vesicle coat-binding motif.

The protein belongs to the EMP24/GP25L family. In terms of assembly, monomer and homodimer in endoplasmic reticulum. Predominantly monomeric and to lesser extent homodimeric in endoplasmic reticulum-Golgi intermediate compartment and cis-Golgi network. Probably oligomerizes with other members of the EMP24/GP25L family such as TMED2, TMED7 and TMED10. Interacts with TMED5. Interacts (via C-terminus) with COPG1; the interaction involves dimeric TMED9. Interacts with PTPN2 and SPAST. Interacts with STX17; the interaction is direct. N-linked glycosylated containing high mannose.

It is found in the endoplasmic reticulum membrane. The protein resides in the golgi apparatus. The protein localises to the cis-Golgi network membrane. Its subcellular location is the endoplasmic reticulum-Golgi intermediate compartment membrane. It localises to the trans-Golgi network membrane. In terms of biological role, appears to be involved in vesicular protein trafficking, mainly in the early secretory pathway. In COPI vesicle-mediated retrograde transport involved in the coatomer recruitment to membranes of the early secretory pathway. Increases coatomer-dependent activity of ARFGAP2. Thought to play a crucial role in the specific retention of p24 complexes in cis-Golgi membranes; specifically contributes to the coupled localization of TMED2 and TMED10 in the cis-Golgi network. May be involved in organization of intracellular membranes, such as of the ER-Golgi intermediate compartment and the Golgi apparatus. Involved in ER localization of PTPN2. In Bos taurus (Bovine), this protein is Transmembrane emp24 domain-containing protein 9 (TMED9).